Consider the following 467-residue polypeptide: UDP-N-acetylmuramate--L-alanine ligase (467 aa).

G114 to T120 is a binding site for ATP.

This sequence belongs to the MurCDEF family.

Its subcellular location is the cytoplasm. The enzyme catalyses UDP-N-acetyl-alpha-D-muramate + L-alanine + ATP = UDP-N-acetyl-alpha-D-muramoyl-L-alanine + ADP + phosphate + H(+). The protein operates within cell wall biogenesis; peptidoglycan biosynthesis. In terms of biological role, cell wall formation. This Rhodopseudomonas palustris (strain ATCC BAA-98 / CGA009) protein is UDP-N-acetylmuramate--L-alanine ligase.